A 332-amino-acid polypeptide reads, in one-letter code: 2,3-diketo-L-gulonate reductase (332 aa).

Residue His44 is the Proton donor of the active site. Residues 168 to 174 (ITMVDMS), 224 to 225 (WK), and 304 to 306 (GHE) each bind NAD(+).

It belongs to the LDH2/MDH2 oxidoreductase family. DlgD subfamily. As to quaternary structure, homodimer.

It is found in the cytoplasm. The enzyme catalyses 3-dehydro-L-gulonate + NAD(+) = 2,3-dioxo-L-gulonate + NADH + H(+). It catalyses the reaction 3-dehydro-L-gulonate + NADP(+) = 2,3-dioxo-L-gulonate + NADPH + H(+). Catalyzes the reduction of 2,3-diketo-L-gulonate in the presence of NADH, to form 3-keto-L-gulonate. In Escherichia coli O6:K15:H31 (strain 536 / UPEC), this protein is 2,3-diketo-L-gulonate reductase.